The following is a 377-amino-acid chain: Glutamate 5-kinase (377 aa).

An ATP-binding site is contributed by Lys22. Residues Ser62, Asp149, and Asn161 each contribute to the substrate site. ATP contacts are provided by residues 181-182 (TD) and 223-229 (TGGMVTK). The 79-residue stretch at 285-363 (RGAIVVDAGA…AQLKRFLGPQ (79 aa)) folds into the PUA domain.

It belongs to the glutamate 5-kinase family.

Its subcellular location is the cytoplasm. The catalysed reaction is L-glutamate + ATP = L-glutamyl 5-phosphate + ADP. The protein operates within amino-acid biosynthesis; L-proline biosynthesis; L-glutamate 5-semialdehyde from L-glutamate: step 1/2. Its function is as follows. Catalyzes the transfer of a phosphate group to glutamate to form L-glutamate 5-phosphate. This is Glutamate 5-kinase from Bifidobacterium longum subsp. infantis (strain ATCC 15697 / DSM 20088 / JCM 1222 / NCTC 11817 / S12).